A 96-amino-acid chain; its full sequence is Aspartyl/glutamyl-tRNA(Asn/Gln) amidotransferase subunit C (96 aa).

The disordered stretch occupies residues Arg-64 to Glu-96.

Belongs to the GatC family. Heterotrimer of A, B and C subunits.

The enzyme catalyses L-glutamyl-tRNA(Gln) + L-glutamine + ATP + H2O = L-glutaminyl-tRNA(Gln) + L-glutamate + ADP + phosphate + H(+). The catalysed reaction is L-aspartyl-tRNA(Asn) + L-glutamine + ATP + H2O = L-asparaginyl-tRNA(Asn) + L-glutamate + ADP + phosphate + 2 H(+). In terms of biological role, allows the formation of correctly charged Asn-tRNA(Asn) or Gln-tRNA(Gln) through the transamidation of misacylated Asp-tRNA(Asn) or Glu-tRNA(Gln) in organisms which lack either or both of asparaginyl-tRNA or glutaminyl-tRNA synthetases. The reaction takes place in the presence of glutamine and ATP through an activated phospho-Asp-tRNA(Asn) or phospho-Glu-tRNA(Gln). The chain is Aspartyl/glutamyl-tRNA(Asn/Gln) amidotransferase subunit C from Geobacillus thermodenitrificans (strain NG80-2).